A 100-amino-acid chain; its full sequence is MAKKSMIEREKKRAKLVEKYSEKREALLEEFRTTESPLEKLEIHRQIQQLPRNSAPNRRRNRCWVTGRPRGVYRDFGLSRNVLREWAHEGLLPGVVKSSW.

Belongs to the universal ribosomal protein uS14 family. Part of the 30S ribosomal subunit. Contacts proteins S3 and S10.

Functionally, binds 16S rRNA, required for the assembly of 30S particles and may also be responsible for determining the conformation of the 16S rRNA at the A site. The protein is Small ribosomal subunit protein uS14 of Nostoc sp. (strain PCC 7120 / SAG 25.82 / UTEX 2576).